Reading from the N-terminus, the 479-residue chain is Chromosomal replication initiator protein DnaA (479 aa).

Residues 1–74 (MFSGVVMAWQ…RSLTGVDSSI (74 aa)) are domain I, interacts with DnaA modulators. The domain II stretch occupies residues 74 to 142 (ITDVRFLEKK…SVPKNNASIR (69 aa)). Residues 143–360 (ALHPRYTFDE…SAITAIGARA (218 aa)) form a domain III, AAA+ region region. G187, G189, K190, and S191 together coordinate ATP. The interval 361-479 (RLMGGYIDMN…NLLSDKVKQI (119 aa)) is domain IV, binds dsDNA.

This sequence belongs to the DnaA family. Oligomerizes as a right-handed, spiral filament on DNA at oriC.

The protein resides in the cytoplasm. Its function is as follows. Plays an essential role in the initiation and regulation of chromosomal replication. ATP-DnaA binds to the origin of replication (oriC) to initiate formation of the DNA replication initiation complex once per cell cycle. Binds the DnaA box (a 9 base pair repeat at the origin) and separates the double-stranded (ds)DNA. Forms a right-handed helical filament on oriC DNA; dsDNA binds to the exterior of the filament while single-stranded (ss)DNA is stabiized in the filament's interior. The ATP-DnaA-oriC complex binds and stabilizes one strand of the AT-rich DNA unwinding element (DUE), permitting loading of DNA polymerase. After initiation quickly degrades to an ADP-DnaA complex that is not apt for DNA replication. Binds acidic phospholipids. The sequence is that of Chromosomal replication initiator protein DnaA from Desulfotalea psychrophila (strain LSv54 / DSM 12343).